The following is a 415-amino-acid chain: Phosphoribosylamine--glycine ligase (415 aa).

An ATP-grasp domain is found at 108 to 311; it reads KKIMEKYNIP…LMQHIIDLDE (204 aa). 134 to 191 contacts ATP; that stretch reads IENCELPVVVKKDGLAAGKGVIIADTIEAARSAIEIMYGDEEEGTVVFETFLEGEEFS. 2 residues coordinate Mg(2+): Glu-281 and Asn-283.

It belongs to the GARS family. The cofactor is Mg(2+). Requires Mn(2+) as cofactor.

The enzyme catalyses 5-phospho-beta-D-ribosylamine + glycine + ATP = N(1)-(5-phospho-beta-D-ribosyl)glycinamide + ADP + phosphate + H(+). Its pathway is purine metabolism; IMP biosynthesis via de novo pathway; N(1)-(5-phospho-D-ribosyl)glycinamide from 5-phospho-alpha-D-ribose 1-diphosphate: step 2/2. The polypeptide is Phosphoribosylamine--glycine ligase (Staphylococcus aureus (strain COL)).